The following is a 1240-amino-acid chain: DNA polymerase II large subunit (1240 aa).

It belongs to the archaeal DNA polymerase II family. As to quaternary structure, heterodimer of a large subunit and a small subunit.

It carries out the reaction DNA(n) + a 2'-deoxyribonucleoside 5'-triphosphate = DNA(n+1) + diphosphate. It catalyses the reaction Exonucleolytic cleavage in the 3'- to 5'-direction to yield nucleoside 5'-phosphates.. Functionally, possesses two activities: a DNA synthesis (polymerase) and an exonucleolytic activity that degrades single-stranded DNA in the 3'- to 5'-direction. Has a template-primer preference which is characteristic of a replicative DNA polymerase. In Methanopyrus kandleri (strain AV19 / DSM 6324 / JCM 9639 / NBRC 100938), this protein is DNA polymerase II large subunit.